Consider the following 282-residue polypeptide: Bifunctional protein FolD (282 aa).

NADP(+) is bound by residues 165–167 (NRS), Ser-190, and Ile-231.

Belongs to the tetrahydrofolate dehydrogenase/cyclohydrolase family. In terms of assembly, homodimer.

The enzyme catalyses (6R)-5,10-methylene-5,6,7,8-tetrahydrofolate + NADP(+) = (6R)-5,10-methenyltetrahydrofolate + NADPH. The catalysed reaction is (6R)-5,10-methenyltetrahydrofolate + H2O = (6R)-10-formyltetrahydrofolate + H(+). It participates in one-carbon metabolism; tetrahydrofolate interconversion. Functionally, catalyzes the oxidation of 5,10-methylenetetrahydrofolate to 5,10-methenyltetrahydrofolate and then the hydrolysis of 5,10-methenyltetrahydrofolate to 10-formyltetrahydrofolate. The polypeptide is Bifunctional protein FolD (Clostridium botulinum (strain Okra / Type B1)).